The chain runs to 129 residues: Large ribosomal subunit protein uL22 (129 aa).

It belongs to the universal ribosomal protein uL22 family. Part of the 50S ribosomal subunit.

In terms of biological role, this protein binds specifically to 23S rRNA; its binding is stimulated by other ribosomal proteins, e.g. L4, L17, and L20. It is important during the early stages of 50S assembly. It makes multiple contacts with different domains of the 23S rRNA in the assembled 50S subunit and ribosome. The globular domain of the protein is located near the polypeptide exit tunnel on the outside of the subunit, while an extended beta-hairpin is found that lines the wall of the exit tunnel in the center of the 70S ribosome. The chain is Large ribosomal subunit protein uL22 from Brucella abortus (strain 2308).